The sequence spans 243 residues: Tyrosine recombinase XerD-like (243 aa).

A Core-binding (CB) domain is found at 1–72 (MKEYIRPFLN…AVNQFLYFLY (72 aa)). The region spanning 85–243 (LPKVSVSKEQ…KTMITLEKYR (159 aa)) is the Tyr recombinase domain. Catalysis depends on residues Lys149 and Arg210. Residue Tyr242 is the O-(3'-phospho-DNA)-tyrosine intermediate of the active site.

This sequence belongs to the 'phage' integrase family. XerD-like subfamily.

The protein localises to the cytoplasm. Its function is as follows. Putative tyrosine recombinase. Not involved in the cutting and rejoining of the recombining DNA molecules on dif(SL) site. The sequence is that of Tyrosine recombinase XerD-like from Streptococcus sanguinis (strain SK36).